The primary structure comprises 232 residues: Flagellar L-ring protein (232 aa).

The signal sequence occupies residues 1–15; that stretch reads MKKVLFYVLPFAFFG. C16 carries N-palmitoyl cysteine lipidation. A lipid anchor (S-diacylglycerol cysteine) is attached at C16.

It belongs to the FlgH family. As to quaternary structure, the basal body constitutes a major portion of the flagellar organelle and consists of four rings (L,P,S, and M) mounted on a central rod.

Its subcellular location is the cell outer membrane. It is found in the bacterial flagellum basal body. In terms of biological role, assembles around the rod to form the L-ring and probably protects the motor/basal body from shearing forces during rotation. The chain is Flagellar L-ring protein from Campylobacter jejuni subsp. jejuni serotype O:23/36 (strain 81-176).